The sequence spans 161 residues: Nucleotide-binding protein Tbd_1846 (161 aa).

It belongs to the YajQ family.

Nucleotide-binding protein. The chain is Nucleotide-binding protein Tbd_1846 from Thiobacillus denitrificans (strain ATCC 25259 / T1).